We begin with the raw amino-acid sequence, 225 residues long: Holliday junction branch migration complex subunit RuvA (225 aa).

Positions 1 to 71 (MISWINGELV…EDSDLLFGFT (71 aa)) are domain I. The domain II stretch occupies residues 72-150 (SKDQKFFFIE…SKIQIEEEKG (79 aa)). Positions 151-161 (QEEFEITNPEI) are flexible linker. The segment at 161–225 (IYKLMEDLQL…LDQGNSNLAR (65 aa)) is domain III.

It belongs to the RuvA family. In terms of assembly, homotetramer. Forms an RuvA(8)-RuvB(12)-Holliday junction (HJ) complex. HJ DNA is sandwiched between 2 RuvA tetramers; dsDNA enters through RuvA and exits via RuvB. An RuvB hexamer assembles on each DNA strand where it exits the tetramer. Each RuvB hexamer is contacted by two RuvA subunits (via domain III) on 2 adjacent RuvB subunits; this complex drives branch migration. In the full resolvosome a probable DNA-RuvA(4)-RuvB(12)-RuvC(2) complex forms which resolves the HJ.

The protein localises to the cytoplasm. Its function is as follows. The RuvA-RuvB-RuvC complex processes Holliday junction (HJ) DNA during genetic recombination and DNA repair, while the RuvA-RuvB complex plays an important role in the rescue of blocked DNA replication forks via replication fork reversal (RFR). RuvA specifically binds to HJ cruciform DNA, conferring on it an open structure. The RuvB hexamer acts as an ATP-dependent pump, pulling dsDNA into and through the RuvAB complex. HJ branch migration allows RuvC to scan DNA until it finds its consensus sequence, where it cleaves and resolves the cruciform DNA. The chain is Holliday junction branch migration complex subunit RuvA from Prochlorococcus marinus (strain MIT 9215).